Here is a 143-residue protein sequence, read N- to C-terminus: Cell division protein SepF (143 aa).

The protein belongs to the SepF family. As to quaternary structure, homodimer. Interacts with FtsZ.

The protein localises to the cytoplasm. Its function is as follows. Cell division protein that is part of the divisome complex and is recruited early to the Z-ring. Probably stimulates Z-ring formation, perhaps through the cross-linking of FtsZ protofilaments. Its function overlaps with FtsA. The polypeptide is Cell division protein SepF (Geobacillus thermodenitrificans (strain NG80-2)).